Consider the following 380-residue polypeptide: MKNEMLALILAGGQGTRLGKLTQSIAKPAVQFGGRYRIIDFALSNCANSGIHNVGVITQYQPLALNSHIGNGSSWGLDGINSGVSILQPYSASEGNRWFEGTSHAIYQNIDYIDSINPEYVLILSGDHIYKMDYDDMLQSHKDNNASLTVAVLDVPLKEASRFGIMNTDANNRIVEFEEKPENPKSTKASMGIYIFDWQRLRNMLVAAEKSNVDMSDFGKNVIPNYLESGESVYAYDFAGYWKDVGTVESLWEANMEYISPENALDSRNRRWKIYSRNLISPPNFISENSHVEDSLVVDGCFVDGTVKHSILSTGAQVKKGAVIEDSVIMSGAVIGKDAKIKRAIIGEGAIISDGVEIDGTEEVYVVGYNEKVGVPKDED.

Alpha-D-glucose 1-phosphate is bound by residues G164, E179–K180, and S190.

This sequence belongs to the bacterial/plant glucose-1-phosphate adenylyltransferase family. As to quaternary structure, homotetramer.

It catalyses the reaction alpha-D-glucose 1-phosphate + ATP + H(+) = ADP-alpha-D-glucose + diphosphate. It functions in the pathway glycan biosynthesis; glycogen biosynthesis. Functionally, involved in the biosynthesis of ADP-glucose, a building block required for the elongation reactions to produce glycogen. Catalyzes the reaction between ATP and alpha-D-glucose 1-phosphate (G1P) to produce pyrophosphate and ADP-Glc. This Streptococcus sanguinis (strain SK36) protein is Glucose-1-phosphate adenylyltransferase.